The sequence spans 284 residues: Bifunctional protein FolD (284 aa).

NADP(+) contacts are provided by residues 166–168 (GAS), S191, and I232.

It belongs to the tetrahydrofolate dehydrogenase/cyclohydrolase family. Homodimer.

The enzyme catalyses (6R)-5,10-methylene-5,6,7,8-tetrahydrofolate + NADP(+) = (6R)-5,10-methenyltetrahydrofolate + NADPH. It catalyses the reaction (6R)-5,10-methenyltetrahydrofolate + H2O = (6R)-10-formyltetrahydrofolate + H(+). Its pathway is one-carbon metabolism; tetrahydrofolate interconversion. In terms of biological role, catalyzes the oxidation of 5,10-methylenetetrahydrofolate to 5,10-methenyltetrahydrofolate and then the hydrolysis of 5,10-methenyltetrahydrofolate to 10-formyltetrahydrofolate. In Neisseria meningitidis serogroup A / serotype 4A (strain DSM 15465 / Z2491), this protein is Bifunctional protein FolD.